The following is a 155-amino-acid chain: Small ribosomal subunit protein uS7cz/uS7cy (155 aa).

It belongs to the universal ribosomal protein uS7 family. As to quaternary structure, part of the 30S ribosomal subunit.

The protein resides in the plastid. It is found in the chloroplast. Its function is as follows. One of the primary rRNA binding proteins, it binds directly to 16S rRNA where it nucleates assembly of the head domain of the 30S subunit. The chain is Small ribosomal subunit protein uS7cz/uS7cy (rps7-A) from Ipomoea purpurea (Common morning glory).